The chain runs to 137 residues: ATP synthase epsilon chain (137 aa).

The protein belongs to the ATPase epsilon chain family. As to quaternary structure, F-type ATPases have 2 components, CF(1) - the catalytic core - and CF(0) - the membrane proton channel. CF(1) has five subunits: alpha(3), beta(3), gamma(1), delta(1), epsilon(1). CF(0) has three main subunits: a, b and c.

Its subcellular location is the cellular thylakoid membrane. Functionally, produces ATP from ADP in the presence of a proton gradient across the membrane. The chain is ATP synthase epsilon chain from Trichormus variabilis (strain ATCC 29413 / PCC 7937) (Anabaena variabilis).